The following is a 230-amino-acid chain: Orotidine 5'-phosphate decarboxylase (230 aa).

Residues Asp10, Lys32, 59 to 68, Thr119, Arg180, Gln189, Gly209, and Arg210 contribute to the substrate site; that span reads DLKYHDIPNT. The active-site Proton donor is Lys61.

It belongs to the OMP decarboxylase family. Type 1 subfamily. In terms of assembly, homodimer.

The catalysed reaction is orotidine 5'-phosphate + H(+) = UMP + CO2. It participates in pyrimidine metabolism; UMP biosynthesis via de novo pathway; UMP from orotate: step 2/2. Functionally, catalyzes the decarboxylation of orotidine 5'-monophosphate (OMP) to uridine 5'-monophosphate (UMP). The protein is Orotidine 5'-phosphate decarboxylase of Glaesserella parasuis serovar 5 (strain SH0165) (Haemophilus parasuis).